A 305-amino-acid polypeptide reads, in one-letter code: NK1 transcription factor-related protein 2 (305 aa).

Disordered regions lie at residues 51–158 (EEVE…KPRR) and 210–257 (KWKK…PGAL). A compositionally biased stretch (acidic residues) spans 87 to 96 (SEAEEEEEAE). The segment covering 97-115 (DAGRAHQPERWQGVHEGSP) has biased composition (basic and acidic residues). A compositionally biased stretch (low complexity) spans 129–140 (AEGLPASPGSPG). The segment at residues 156-215 (PRRARTAFTYEQLVALENKFRATRYLSVCERLNLALSLSLTETQVKIWFQNRRTKWKKQN) is a DNA-binding region (homeobox).

This sequence belongs to the NK-1 homeobox family. As to quaternary structure, interacts (via the homeodomain) with HIPK1, HIPK2, and HIPK3. Post-translationally, phosphorylated by HIPK2 in vitro. In terms of tissue distribution, expression detected in the brain, testis and spleen. In the testis, expressed in the germ cells of the seminiferous epithelium, predominantly in elongating spermatids and spermatozoa. Expressed throughout the brain with highest levels in regions of the cerebral cortex, hippocampus, diencephalon, pons, medulla and cerebellum.

The protein localises to the nucleus. It localises to the nucleolus. Transcriptional repressor. May play a role in early development as a Wnt/beta-catenin effector, hence controlling pluripotency and preimplantation development of embryonic stem cells. May promote adipogenesis in mesenchymal stem cells, possibly by inhibiting the expression of the antiadipogenic factor NR2F2. May inhibit osteoblastogenic differentiation. The sequence is that of NK1 transcription factor-related protein 2 (Nkx1-2) from Mus musculus (Mouse).